Consider the following 383-residue polypeptide: tRNA (guanine(26)-N(2))-dimethyltransferase (383 aa).

In terms of domain architecture, Trm1 methyltransferase spans 4-371; that stretch reads EIITEGRTPL…ASPEEFEAVL (368 aa). S-adenosyl-L-methionine-binding residues include Arg38, Arg63, Asp80, Asp108, and Ala109. Positions 243, 246, 258, and 261 each coordinate Zn(2+).

Belongs to the class I-like SAM-binding methyltransferase superfamily. Trm1 family.

It carries out the reaction guanosine(26) in tRNA + 2 S-adenosyl-L-methionine = N(2)-dimethylguanosine(26) in tRNA + 2 S-adenosyl-L-homocysteine + 2 H(+). Functionally, dimethylates a single guanine residue at position 26 of a number of tRNAs using S-adenosyl-L-methionine as donor of the methyl groups. The chain is tRNA (guanine(26)-N(2))-dimethyltransferase from Methanopyrus kandleri (strain AV19 / DSM 6324 / JCM 9639 / NBRC 100938).